A 1191-amino-acid chain; its full sequence is Major DNA-binding protein (1191 aa).

The short motif at 820 to 821 is the Required for filament formation element; that stretch reads FW. Disordered stretches follow at residues 1122 to 1146 and 1168 to 1191; these read TAAGSAAGGGGSATEGGGGGAAADE and AGLINGDDVRGDDEFELPSKRSRL. The span at 1127–1142 shows a compositional bias: gly residues; it reads AAGGGGSATEGGGGGA. The segment at 1173-1191 is required for nuclear localization; the sequence is GDDVRGDDEFELPSKRSRL.

This sequence belongs to the herpesviridae major DNA-binding protein family. As to quaternary structure, homooligomers. Forms double-helical filaments necessary for the formation of replication compartments within the host nucleus. Interacts with the origin-binding protein. Interacts with the helicase primase complex; this interaction stimulates primer synthesis activity of the helicase-primase complex. Interacts with the DNA polymerase. Interacts with the alkaline exonuclease; this interaction increases its nuclease processivity.

It is found in the host nucleus. In terms of biological role, single-stranded DNA-binding protein required for DNA replication. Its function is as follows. Plays several crucial roles in viral infection. Participates in the opening of the viral DNA origin to initiate replication by interacting with the origin-binding protein. May disrupt loops, hairpins and other secondary structures present on ssDNA to reduce and eliminate pausing of viral DNA polymerase at specific sites during elongation. Promotes viral DNA recombination by performing strand-transfer, characterized by the ability to transfer a DNA strand from a linear duplex to a complementary single-stranded DNA circle. Can also catalyze the renaturation of complementary single strands. Additionally, reorganizes the host cell nucleus, leading to the formation of prereplicative sites and replication compartments. This process is driven by the protein which can form double-helical filaments in the absence of DNA. In Mus musculus (Mouse), this protein is Major DNA-binding protein.